A 228-amino-acid chain; its full sequence is UPF0173 metal-dependent hydrolase RBAM_026340 (228 aa).

This sequence belongs to the UPF0173 family.

This Bacillus velezensis (strain DSM 23117 / BGSC 10A6 / LMG 26770 / FZB42) (Bacillus amyloliquefaciens subsp. plantarum) protein is UPF0173 metal-dependent hydrolase RBAM_026340.